The sequence spans 43 residues: SPbeta prophage-derived uncharacterized protein YopG (43 aa).

The sequence is that of SPbeta prophage-derived uncharacterized protein YopG (yopG) from Bacillus subtilis (strain 168).